Here is a 223-residue protein sequence, read N- to C-terminus: Ubiquitin carboxyl-terminal hydrolase isozyme L1 (223 aa).

An N-acetylmethionine modification is found at Met-1. The region spanning 2–221 (QLKPMEINPE…VRFSAVALCK (220 aa)) is the UCH catalytic domain. Positions 5–10 (PMEINP) are interaction with ubiquitin. Cys-90 (nucleophile) is an active-site residue. Ser-125 bears the Phosphoserine mark. The Proton donor role is filled by His-161. Positions 211–216 (EVRFSA) are interaction with ubiquitin. A lipid anchor (S-farnesyl cysteine) is attached at Cys-220. Residues 221–223 (KAA) constitute a propeptide, removed in mature form.

This sequence belongs to the peptidase C12 family. In terms of assembly, monomer. Homodimer. Interacts with COPS5 and SNCA. Post-translationally, O-glycosylated. In terms of tissue distribution, expressed in brain, where it is found in neurons but not in oligodendrocytes or astrocytes. Found in the ganglion cell layer and the inner nuclear layer of the retina (at protein level). Expressed in brain and testis. In the brain, expression is at its lowest in replaceable neurons of hippocampus and olfactory bulb. Highly expressed in senescent pituitary. In skeletal muscle, primarily expressed in oxidative muscle fibers.

It localises to the cytoplasm. The protein localises to the endoplasmic reticulum membrane. The catalysed reaction is Thiol-dependent hydrolysis of ester, thioester, amide, peptide and isopeptide bonds formed by the C-terminal Gly of ubiquitin (a 76-residue protein attached to proteins as an intracellular targeting signal).. Its function is as follows. Deubiquitinase that plays a role in the regulation of several processes such as maintenance of synaptic function, cardiac function, inflammatory response or osteoclastogenesis. Abrogates the ubiquitination of multiple proteins including WWTR1/TAZ, EGFR, HIF1A and beta-site amyloid precursor protein cleaving enzyme 1/BACE1. In addition, recognizes and hydrolyzes a peptide bond at the C-terminal glycine of ubiquitin to maintain a stable pool of monoubiquitin that is a key requirement for the ubiquitin-proteasome and the autophagy-lysosome pathways. Regulates amyloid precursor protein/APP processing by promoting BACE1 degradation resulting in decreased amyloid beta production. Plays a role in the immune response by regulating the ability of MHC I molecules to reach cross-presentation compartments competent for generating Ag-MHC I complexes. Mediates the 'Lys-48'-linked deubiquitination of the transcriptional coactivator WWTR1/TAZ leading to its stabilization and inhibition of osteoclastogenesis. Deubiquitinates and stabilizes epidermal growth factor receptor EGFR to prevent its degradation and to activate its downstream mediators. Modulates oxidative activity in skeletal muscle by regulating key mitochondrial oxidative proteins. Enhances the activity of hypoxia-inducible factor 1-alpha/HIF1A by abrogateing its VHL E3 ligase-mediated ubiquitination and consequently inhibiting its degradation. In Mus musculus (Mouse), this protein is Ubiquitin carboxyl-terminal hydrolase isozyme L1 (Uchl1).